An 842-amino-acid polypeptide reads, in one-letter code: Outer membrane usher protein AggC (842 aa).

Positions 1–21 (MKTSSFIIVILLCFRIENVIA) are cleaved as a signal peptide. A disulfide bond links C819 and C841.

It belongs to the fimbrial export usher family.

The protein localises to the cell outer membrane. Its function is as follows. Involved in the export and assembly of the AAF/I fimbriae subunits across the outer membrane. The protein is Outer membrane usher protein AggC (aggC) of Escherichia coli.